Consider the following 338-residue polypeptide: Diacylglycerol acyltransferase/mycolyltransferase Ag85A (338 aa).

Positions Met-1–Gly-42 are cleaved as a signal peptide. Leu-85–Arg-86 provides a ligand contact to substrate. The tract at residues Phe-101–Val-111 is fibronectin-binding. Cys-130 and Cys-135 form a disulfide bridge. The substrate site is built by Ser-169 and Asp-197. The active-site Nucleophile is Ser-169. The active site involves Glu-273. Substrate is bound by residues Phe-275 to Thr-278, Lys-282, and His-305 to Trp-307. The active site involves His-305.

The protein belongs to the mycobacterial A85 antigen family. Homodimer.

The protein resides in the secreted. The protein localises to the cell wall. Its subcellular location is the cytoplasm. It catalyses the reaction an acyl-CoA + a 1,2-diacyl-sn-glycerol = a triacyl-sn-glycerol + CoA. The enzyme catalyses 2 alpha,alpha'-trehalose 6-mycolate = alpha,alpha'-trehalose 6,6'-bismycolate + alpha,alpha-trehalose. In terms of biological role, the antigen 85 proteins (FbpA, FbpB, FbpC) are responsible for the high affinity of mycobacteria for fibronectin, a large adhesive glycoprotein, which facilitates the attachment of M.tuberculosis to murine alveolar macrophages (AMs). They also help to maintain the integrity of the cell wall by catalyzing the transfer of mycolic acids to cell wall arabinogalactan, and through the synthesis of alpha,alpha-trehalose dimycolate (TDM, cord factor). They catalyze the transfer of a mycoloyl residue from one molecule of alpha,alpha-trehalose monomycolate (TMM) to another TMM, leading to the formation of TDM. FbpA mediates triacylglycerol (TAG) formation with long-chain acyl-CoA as the acyl donor and 1,2-dipalmitoyl-sn-glycerol (1,2-dipalmitin) as the acyl acceptor. It has a preference for C26:0-CoA over C18:1-CoA. This is Diacylglycerol acyltransferase/mycolyltransferase Ag85A (fbpA) from Mycobacterium bovis (strain ATCC BAA-935 / AF2122/97).